Reading from the N-terminus, the 467-residue chain is Regulator of nonsense transcripts 3B (467 aa).

2 disordered regions span residues 1–30 (MKED…KPCK) and 197–467 (REEK…KAAE). Composition is skewed to basic and acidic residues over residues 197–389 (REEK…EHTG) and 396–421 (RPEK…KDRP). Positions 435–447 (RGGGGGGGTGGDG) are enriched in gly residues. Basic and acidic residues predominate over residues 449–467 (AAEKRAEREAKKNQEKAAE).

It belongs to the RENT3 family.

It is found in the nucleus. The protein localises to the cytoplasm. Functionally, involved in nonsense-mediated decay (NMD) of mRNAs containing premature stop codons by associating with the nuclear exon junction complex (EJC) and serving as link between the EJC core and NMD machinery. Recruits UPF2 at the cytoplasmic side of the nuclear envelope and the subsequent formation of an UPF1-UPF2-UPF3 surveillance complex (including UPF1 bound to release factors at the stalled ribosome) is believed to activate NMD. In cooperation with UPF2 stimulates both ATPase and RNA helicase activities of UPF1. Binds spliced mRNA upstream of exon-exon junctions. The protein is Regulator of nonsense transcripts 3B of Danio rerio (Zebrafish).